The chain runs to 157 residues: Peroxiredoxin Bcp (157 aa).

The Thioredoxin domain maps to Ile3–Glu156. Cys45 acts as the Cysteine sulfenic acid (-SOH) intermediate in catalysis. Cysteines 45 and 50 form a disulfide.

It belongs to the peroxiredoxin family. BCP/PrxQ subfamily. As to quaternary structure, monomer.

The enzyme catalyses a hydroperoxide + [thioredoxin]-dithiol = an alcohol + [thioredoxin]-disulfide + H2O. In terms of biological role, thiol-specific peroxidase that catalyzes the reduction of hydrogen peroxide and organic hydroperoxides to water and alcohols, respectively. Plays a role in cell protection against oxidative stress by detoxifying peroxides and as sensor of hydrogen peroxide-mediated signaling events. In Bacillus subtilis (strain 168), this protein is Peroxiredoxin Bcp (ygaF).